Reading from the N-terminus, the 251-residue chain is Transcriptional cofactor Bfc (251 aa).

As to quaternary structure, interacts with srp (via GATA-type Zn-finger domain); this interaction enhances srp binding to the promoter of crq/croquemort.

It is found in the nucleus. Functionally, transcriptional cofactor involved in efferocytosis. Together with srp mediates expression of the phagocytic receptor crq/croquemort in response to apoptotic cells, and is up-regulated by crq/croquemort in a positive feedback mechanism. Involved in macrophage engulfment and clearance of apoptotic cells during embryogenesis. The protein is Transcriptional cofactor Bfc of Drosophila melanogaster (Fruit fly).